A 446-amino-acid polypeptide reads, in one-letter code: NADH-quinone oxidoreductase subunit D (446 aa).

The protein belongs to the complex I 49 kDa subunit family. NDH-1 is composed of 14 different subunits. Subunits NuoB, C, D, E, F, and G constitute the peripheral sector of the complex.

It is found in the cell membrane. The enzyme catalyses a quinone + NADH + 5 H(+)(in) = a quinol + NAD(+) + 4 H(+)(out). Its function is as follows. NDH-1 shuttles electrons from NADH, via FMN and iron-sulfur (Fe-S) centers, to quinones in the respiratory chain. The immediate electron acceptor for the enzyme in this species is believed to be a menaquinone. Couples the redox reaction to proton translocation (for every two electrons transferred, four hydrogen ions are translocated across the cytoplasmic membrane), and thus conserves the redox energy in a proton gradient. In Nocardioides sp. (strain ATCC BAA-499 / JS614), this protein is NADH-quinone oxidoreductase subunit D.